The primary structure comprises 213 residues: Protein GET1 (213 aa).

At 1-4 (MPSL) the chain is on the lumenal side. Residues 5 to 24 (LLVVFILQFLLHIINTVGAS) form a helical membrane-spanning segment. Residues 25–110 (TVNDLLWILY…AFTSAVSTLR (86 aa)) lie on the Cytoplasmic side of the membrane. Residues 41–68 (TSSSAQKAQKLKKEIVQLKRELGATSAQ) are a coiled coil. Residues 111 to 131 (WLGTQGLRFVLQFWFAKSPMF) form a helical membrane-spanning segment. At 132–155 (WMPAGWLPFYVEWILSFPRAPLGS) the chain is on the lumenal side. The chain crosses the membrane as a helical span at residues 156 to 172 (VSINVWGIACASMIALA). Over 173–213 (AEGLAAVWVLATKRPTPIATEKKEAMAFAADQKSSGEKKEL) the chain is Cytoplasmic.

The protein belongs to the WRB/GET1 family. As to quaternary structure, interacts with GET3.

The protein resides in the endoplasmic reticulum membrane. Its function is as follows. Required for the post-translational delivery of tail-anchored (TA) proteins to the endoplasmic reticulum. Acts as a membrane receptor for soluble GET3, which recognizes and selectively binds the transmembrane domain of TA proteins in the cytosol. The protein is Protein GET1 of Phaeosphaeria nodorum (strain SN15 / ATCC MYA-4574 / FGSC 10173) (Glume blotch fungus).